We begin with the raw amino-acid sequence, 259 residues long: Probable transcriptional regulatory protein Noca_2383 (259 aa).

This sequence belongs to the TACO1 family.

It is found in the cytoplasm. The sequence is that of Probable transcriptional regulatory protein Noca_2383 from Nocardioides sp. (strain ATCC BAA-499 / JS614).